The chain runs to 310 residues: MATEKSKILVIGGTGYIGKFLVEASAKAGHSTFALVREATLSDPVKGKTVQSFKDLGVTILHGDLNDHESLVKAIKQVDVVISTVGSMQILDQTKIISAIKEAGNVKRFLPSEFGVDVDRTSAVEPAKSAFAGKIQIRRTIEAEGIPYTYAVTGCFGGYYLPTLVQFEPGLTSPPRDKVTILGDGNAKAVINKEEDIAAYTIKAVDDPRTLNKILYIKPSNNTLSMNEIVTLWEKKIGKSLEKTHLPEEQLLKSIQESPIPINVVLSINHAVFVNGDTNISIEPSFGVEASELYPDVKYTSVDEYLSYFA.

NADP(+)-binding positions include 12–18 (GGTGYIG), R37, and K46. The active-site Proton acceptor is K134. NADP(+) is bound at residue R138.

Belongs to the NmrA-type oxidoreductase family. Isoflavone reductase subfamily.

It is found in the cytoplasm. This chain is Isoflavone reductase homolog P3, found in Arabidopsis thaliana (Mouse-ear cress).